We begin with the raw amino-acid sequence, 439 residues long: Lipase 1 (439 aa).

Residues 1-24 (MRCSLRMQLLLLLGLCVFISRIQG) form the signal peptide. The tract at residues 28–60 (GGEEDEEDEEEEEEEEESVEDETPEDRLQRKNI) is disordered. Residues 29–51 (GEEDEEDEEEEEEEEESVEDETP) show a composition bias toward acidic residues. Residues asparagine 124 and asparagine 151 are each glycosylated (N-linked (GlcNAc...) asparagine). The active-site Charge relay system is serine 197. 2 N-linked (GlcNAc...) asparagine glycosylation sites follow: asparagine 346 and asparagine 379. Histidine 393 acts as the Charge relay system in catalysis. Residue asparagine 426 is glycosylated (N-linked (GlcNAc...) asparagine).

Belongs to the AB hydrolase superfamily. Lipase family. In terms of tissue distribution, in 14 hours embryos expression is seen in the foregut/midgut boundary.

Its subcellular location is the secreted. Functionally, could be a digestive enzyme. This is Lipase 1 (Lip1) from Drosophila melanogaster (Fruit fly).